The primary structure comprises 153 residues: Small ribosomal subunit protein uS13 (153 aa).

The tract at residues 134 to 153 (GQRTKSNGRRGRSMGVSRKK) is disordered.

This sequence belongs to the universal ribosomal protein uS13 family.

Its subcellular location is the cytoplasm. Located at the top of the head of the 40S subunit, it contacts several helices of the 18S rRNA. The sequence is that of Small ribosomal subunit protein uS13 (RPS18) from Encephalitozoon cuniculi (strain GB-M1) (Microsporidian parasite).